The following is a 142-amino-acid chain: ATP synthase F(0) complex subunit C3, mitochondrial (142 aa).

The N-terminal 67 residues, M1–R67, are a transit peptide targeting the mitochondrion. A helical membrane pass occupies residues V83–Y103. An N6,N6,N6-trimethyllysine modification is found at K110. Residues I118 to I138 form a helical membrane-spanning segment.

This sequence belongs to the ATPase C chain family. F-type ATPases have 2 components, CF(1) - the catalytic core - and CF(0) - the membrane proton channel. CF(1) has five subunits: alpha(3), beta(3), gamma(1), delta(1), epsilon(1). CF(0) has three main subunits: a, b and c. Interacts with TMEM70 and TMEM242. In terms of processing, trimethylated by ATPSCKMT at Lys-110. Methylation is required for proper incorporation of the C subunit into the ATP synthase complex and mitochondrial respiration.

The protein resides in the mitochondrion membrane. Mitochondrial membrane ATP synthase (F(1)F(0) ATP synthase or Complex V) produces ATP from ADP in the presence of a proton gradient across the membrane which is generated by electron transport complexes of the respiratory chain. F-type ATPases consist of two structural domains, F(1) - containing the extramembraneous catalytic core and F(0) - containing the membrane proton channel, linked together by a central stalk and a peripheral stalk. During catalysis, ATP synthesis in the catalytic domain of F(1) is coupled via a rotary mechanism of the central stalk subunits to proton translocation. Part of the complex F(0) domain. A homomeric c-ring of probably 10 subunits is part of the complex rotary element. In Pongo abelii (Sumatran orangutan), this protein is ATP synthase F(0) complex subunit C3, mitochondrial.